Reading from the N-terminus, the 36-residue chain is Ostricacin-1 (36 aa).

3 disulfides stabilise this stretch: C3-C29, C8-C23, and C13-C30.

The protein localises to the secreted. Its function is as follows. Has antibacterial activity against the Gram-positive bacteria S.aureus 1056 MRSA (MIC=1.25 ug/ml) and S.aureus NCTC 4163 (MIC=6.7 ug/ml), and the Gram-negative bacteria E.coli O157:H7 (MIC=0.96 ug/ml) and E.coli 0111 (MIC=6.7 ug/ml). Does not have antifungal activity against the yeast C.albicans 3153A. In Struthio camelus (Common ostrich), this protein is Ostricacin-1.